A 320-amino-acid polypeptide reads, in one-letter code: Arabinan endo-1,5-alpha-L-arabinosidase C (320 aa).

An N-terminal signal peptide occupies residues 1–15 (MKLALSLFLLSGSLA). Residue D31 is the Proton acceptor of the active site. N-linked (GlcNAc...) asparagine glycosylation is found at N126 and N190. The active-site Proton donor is the E198.

Belongs to the glycosyl hydrolase 43 family.

It is found in the secreted. It catalyses the reaction Endohydrolysis of (1-&gt;5)-alpha-arabinofuranosidic linkages in (1-&gt;5)-arabinans.. Its pathway is glycan metabolism; L-arabinan degradation. In terms of biological role, endo-1,5-alpha-L-arabinanase involved in degradation of pectin. Its preferred substrate is linear 1,5-alpha-L-arabinan. The protein is Arabinan endo-1,5-alpha-L-arabinosidase C (abnC) of Emericella nidulans (strain FGSC A4 / ATCC 38163 / CBS 112.46 / NRRL 194 / M139) (Aspergillus nidulans).